A 1051-amino-acid chain; its full sequence is Anucleate primary sterigmata protein B (1051 aa).

2 coiled-coil regions span residues 10–200 and 239–285; these read IDRL…YAIA and STLV…ELKL. Residues 58–90 show a composition bias toward basic and acidic residues; that stretch reads KDNQGLKRKIRDLEKQLKDQQSDKESMLNHDPE. 2 disordered regions span residues 58–100 and 141–160; these read KDNQ…DRDH and LKSLNDGRPTGSDSGAREER. Residues 294–303 are compositionally biased toward basic and acidic residues; it reads AGDSILDRSA. 4 disordered regions span residues 294 to 329, 877 to 902, 909 to 928, and 984 to 1051; these read AGDSILDRSASRAQGRPSSSISDRTGQSPIDDAERE, NHPRSRSTTAGVAGSPQSSTIDLAER, NTAAESPARSSIPQPAQMTN, and EERD…DIEV. Positions 309–321 are enriched in polar residues; that stretch reads RPSSSISDRTGQS. Coiled-coil stretches lie at residues 325-743 and 787-878; these read DAER…RNSM and RNLL…LQNH. Composition is skewed to polar residues over residues 877-897 and 916-928; these read NHPRSRSTTAGVAGSPQSSTI and ARSSIPQPAQMTN. Residues 950-1004 are a coiled coil; it reads NQEVWIKRLHELERRLKAEREARLLDRNGARRRLEERDAENKRLRAQLDRQRLRQ. Basic and acidic residues-rich tracts occupy residues 984–1001 and 1028–1040; these read EERDAENKRLRAQLDRQR and EGYREREEEHSSS.

The protein resides in the cytoplasm. Involved in regulation of nuclear migration. May be involved in regulating nuclear positioning. This is Anucleate primary sterigmata protein B (apsB) from Emericella nidulans (strain FGSC A4 / ATCC 38163 / CBS 112.46 / NRRL 194 / M139) (Aspergillus nidulans).